The chain runs to 146 residues: Hemoglobin subunit beta (146 aa).

V1 bears the N-acetylvaline mark. The 145-residue stretch at 2–146 (HLTPEEKTAV…VANALAHKYH (145 aa)) folds into the Globin domain. A Phosphothreonine modification is found at T12. S44 carries the post-translational modification Phosphoserine. K59 is modified (N6-acetyllysine). Residue H63 coordinates heme b. K82 bears the N6-acetyllysine mark. H92 provides a ligand contact to heme b. An S-nitrosocysteine modification is found at C93. Position 144 is an N6-acetyllysine (K144).

The protein belongs to the globin family. Heterotetramer of two alpha chains and two beta chains. As to expression, red blood cells.

Involved in oxygen transport from the lung to the various peripheral tissues. The chain is Hemoglobin subunit beta (HBB) from Chlorocebus aethiops (Green monkey).